The chain runs to 308 residues: UPF0282 protein PYRAB09800 (308 aa).

It belongs to the UPF0282 family.

This chain is UPF0282 protein PYRAB09800, found in Pyrococcus abyssi (strain GE5 / Orsay).